Consider the following 631-residue polypeptide: MGILAKIEQPRDLKGLTYPELEQLAQEIRAEMIDVVSANGGHLAPNLGVVELTLALHRVFDSPKDKIIWDVGHQSYVHKLVTGRQKEFKSLRLYKGLSGFPKRCESPHDCFETGHSSTSISAAVGFAKARDLRKEKNQVVAVIGDGAMTGGMAFEALNHAGHTKTNMIVVLNDNEMAIAQNVGAMSSYLNRLRTDPRYDRSKDEIENLLKRIPGIGSKMAKAAEKAKDSLKYLLVPGLLFEEMGFTYLGPVNGHDQIALEQVFEQAKMVKEPVLVHVLTQKGRGYEPSEKNPALFHGVGPFNKVTGEVIKKPAPPTYTQVFGETLCELAEKDPRITAITAAMPSGTGLNLFAQKFPDRFFDVGIAEQHAVTFSAALAFGGMKPVVSIYSTFYQRAYDQVLHDVCLPHANVVMAIDRAGVVGDDGPTHHGVFDISFLRVIPNLVFMAPKDENELRHMLYTSLQLDGPVALRYPRSVGQGVELTEELRELPVGKAEILQEGKDITLIGVGPMVYTCLAAAVELRHRGVEATVINLRYINPLDRESILRYARMTKRIITVEDHMLAGGMGSAVMEVLGDEGLTDVVVERLGYDEYVDQGAISLLHQGYGLSVVGILKAAERLKVLQRIEGRSSV.

Thiamine diphosphate contacts are provided by residues His-73 and 114–116; that span reads GHS. Asp-145 contacts Mg(2+). Residues 146-147, Asn-174, Tyr-285, and Glu-366 each bind thiamine diphosphate; that span reads GA. Asn-174 provides a ligand contact to Mg(2+).

Belongs to the transketolase family. DXPS subfamily. As to quaternary structure, homodimer. It depends on Mg(2+) as a cofactor. Thiamine diphosphate is required as a cofactor.

The enzyme catalyses D-glyceraldehyde 3-phosphate + pyruvate + H(+) = 1-deoxy-D-xylulose 5-phosphate + CO2. It functions in the pathway metabolic intermediate biosynthesis; 1-deoxy-D-xylulose 5-phosphate biosynthesis; 1-deoxy-D-xylulose 5-phosphate from D-glyceraldehyde 3-phosphate and pyruvate: step 1/1. Functionally, catalyzes the acyloin condensation reaction between C atoms 2 and 3 of pyruvate and glyceraldehyde 3-phosphate to yield 1-deoxy-D-xylulose-5-phosphate (DXP). The sequence is that of 1-deoxy-D-xylulose-5-phosphate synthase from Desulfitobacterium hafniense (strain Y51).